A 421-amino-acid chain; its full sequence is Phosphoglycerate kinase, cytosolic (421 aa).

Positions 23, 24, 25, 26, 39, 61, 62, 64, 65, 135, 172, and 173 each coordinate (2R)-3-phosphoglycerate. ADP is bound by residues G218 and A219. G218 contacts CDP. A219 and K220 together coordinate AMP. A219 provides a ligand contact to ATP. A Mg(2+)-binding site is contributed by A219. K220 contacts (2R)-3-phosphoglycerate. D223 contributes to the CDP binding site. D223 contributes to the Mg(2+) binding site. Residues K224 and G242 each coordinate ADP. An AMP-binding site is contributed by K224. K224 contacts ATP. G242 provides a ligand contact to CDP. AMP-binding residues include A243 and A315. ATP-binding residues include A243 and A315. A315 and N339 together coordinate ADP. 2 residues coordinate CDP: G340 and F345. F345, E346, D378, and S379 together coordinate ADP. AMP is bound at residue E346. ATP contacts are provided by E346, D378, and S379. Residue D378 coordinates Mg(2+).

Belongs to the phosphoglycerate kinase family. In terms of assembly, monomer. The cofactor is Mg(2+).

It localises to the cytoplasm. The catalysed reaction is (2R)-3-phosphoglycerate + ATP = (2R)-3-phospho-glyceroyl phosphate + ADP. The protein operates within carbohydrate degradation; glycolysis; pyruvate from D-glyceraldehyde 3-phosphate: step 2/5. The chain is Phosphoglycerate kinase, cytosolic from Trypanosoma brucei brucei.